Here is a 400-residue protein sequence, read N- to C-terminus: Phosphoglycerate kinase (400 aa).

Residues 24 to 26 (DFN), Arg-39, 62 to 65 (HFGR), Arg-121, and Arg-154 contribute to the substrate site. ATP is bound by residues Lys-205, Gly-296, Glu-327, and 356 to 359 (GGDS).

The protein belongs to the phosphoglycerate kinase family. As to quaternary structure, monomer.

It localises to the cytoplasm. The catalysed reaction is (2R)-3-phosphoglycerate + ATP = (2R)-3-phospho-glyceroyl phosphate + ADP. The protein operates within carbohydrate degradation; glycolysis; pyruvate from D-glyceraldehyde 3-phosphate: step 2/5. The protein is Phosphoglycerate kinase of Rippkaea orientalis (strain PCC 8801 / RF-1) (Cyanothece sp. (strain PCC 8801)).